Here is a 358-residue protein sequence, read N- to C-terminus: Glyoxylate/succinic semialdehyde reductase 2, chloroplastic (358 aa).

A chloroplast-targeting transit peptide spans methionine 1–cysteine 44. Residues glycine 70 to asparagine 84 and threonine 161 contribute to the NADP(+) site. Lysine 236 is a catalytic residue. Position 304 (lysine 304) interacts with NADP(+).

This sequence belongs to the HIBADH-related family. NP60 subfamily.

Its subcellular location is the plastid. It localises to the chloroplast stroma. It catalyses the reaction glycolate + NADP(+) = glyoxylate + NADPH + H(+). The enzyme catalyses 4-hydroxybutanoate + NADP(+) = succinate semialdehyde + NADPH + H(+). The ratio of NADPH/NADP(+) may regulate enzymatic activity. Catalyzes the NADPH-dependent reduction of glyoxylate to glycolate as well as succinic semialdehyde (SSA) to gamma-hydroxybutyrate in vitro. May function in redox homeostasis and play a role in oxidative stress tolerance by detoxifying glyoxylate and SSA generated in glycolate metabolism and GABA metabolism, respectively. The chain is Glyoxylate/succinic semialdehyde reductase 2, chloroplastic (GLYR2) from Arabidopsis thaliana (Mouse-ear cress).